The chain runs to 423 residues: UPF0229 protein VP0986 (423 aa).

The segment at 69–112 is disordered; the sequence is GGVRERVHPGNDQFITGDKIERPKGGGQGSGSGEGNASPDGEGQ. The segment covering 93-102 has biased composition (gly residues); sequence GGGQGSGSGE.

Belongs to the UPF0229 family.

The sequence is that of UPF0229 protein VP0986 from Vibrio parahaemolyticus serotype O3:K6 (strain RIMD 2210633).